Reading from the N-terminus, the 502-residue chain is Cardiolipin synthase (502 aa).

3 consecutive transmembrane segments (helical) span residues 7–27 (VAIL…FWEG), 29–49 (LLGL…LVIS), and 59–79 (IAWL…YLLF). PLD phosphodiesterase domains lie at 237-264 (INFR…GDEY) and 415-442 (EKGF…DMRS). Active-site residues include histidine 242, lysine 244, aspartate 249, histidine 420, lysine 422, and aspartate 427.

Belongs to the phospholipase D family. Cardiolipin synthase subfamily.

It localises to the cell membrane. The enzyme catalyses 2 a 1,2-diacyl-sn-glycero-3-phospho-(1'-sn-glycerol) = a cardiolipin + glycerol. Catalyzes the reversible phosphatidyl group transfer from one phosphatidylglycerol molecule to another to form cardiolipin (CL) (diphosphatidylglycerol) and glycerol. This chain is Cardiolipin synthase (cls), found in Geobacillus kaustophilus (strain HTA426).